Here is a 532-residue protein sequence, read N- to C-terminus: Optineurin (532 aa).

Coiled-coil stretches lie at residues 27–143 (SMKN…LKLG) and 195–466 (EEVA…EEMM). A CCHC NOA-type zinc finger spans residues 502–532 (QPSITVYTCPKCNLTVPDMDTLQIHVMDCIT). 4 residues coordinate Zn(2+): Cys510, Cys513, His526, and Cys530.

Its subcellular location is the cytoplasm. It localises to the perinuclear region. It is found in the golgi apparatus. The protein resides in the trans-Golgi network. The protein localises to the cytoplasmic vesicle. Its subcellular location is the recycling endosome. It localises to the autophagosome. Probably part of the TNF-alpha signaling pathway that can shift the equilibrium toward induction of cell death. May act by regulating membrane trafficking and cellular morphogenesis. This Xenopus laevis (African clawed frog) protein is Optineurin (optn).